Here is a 217-residue protein sequence, read N- to C-terminus: Uracil-DNA glycosylase (217 aa).

Asp-62 (proton acceptor) is an active-site residue.

The protein belongs to the uracil-DNA glycosylase (UDG) superfamily. UNG family.

The protein resides in the cytoplasm. It carries out the reaction Hydrolyzes single-stranded DNA or mismatched double-stranded DNA and polynucleotides, releasing free uracil.. Functionally, excises uracil residues from the DNA which can arise as a result of misincorporation of dUMP residues by DNA polymerase or due to deamination of cytosine. The protein is Uracil-DNA glycosylase of Streptococcus pneumoniae (strain P1031).